A 307-amino-acid polypeptide reads, in one-letter code: Protein TIPIN homolog (307 aa).

Disordered regions lie at residues 1-50 (MASL…SQDA) and 252-279 (ASMDISDYGQPLPPSQPPTPAAKKLSNE). The span at 262 to 271 (PLPPSQPPTP) shows a compositional bias: pro residues.

Belongs to the CSM3 family.

It localises to the cytoplasm. Its subcellular location is the nucleus. Required for normal progression of S-phase. Important for cell survival after DNA damage or replication stress. In Drosophila melanogaster (Fruit fly), this protein is Protein TIPIN homolog.